The sequence spans 735 residues: Photosystem I P700 chlorophyll a apoprotein A2 (735 aa).

A run of 8 helical transmembrane segments spans residues 47–70, 136–159, 176–200, 274–292, 331–354, 370–396, 418–440, and 518–536; these read IFAS…FHVA, LYNG…LHLQ, LNHH…HVAI, MAHH…GHMY, LHFQ…QHMY, AALY…IFFI, AIIS…LYVH, and FLVH…LILV. 2 residues coordinate [4Fe-4S] cluster: Cys-560 and Cys-569. The next 2 helical transmembrane spans lie at 576–597 and 644–666; these read AFYL…YWHW and LSVW…MFLI. Residues His-655, Met-663, and Tyr-671 each contribute to the chlorophyll a site. Residue Trp-672 participates in phylloquinone binding. A helical membrane pass occupies residues 708-728; the sequence is LVGLVHFSVGYIFTYAAFLIA.

This sequence belongs to the PsaA/PsaB family. The PsaA/B heterodimer binds the P700 chlorophyll special pair and subsequent electron acceptors. PSI consists of a core antenna complex that captures photons, and an electron transfer chain that converts photonic excitation into a charge separation. The eukaryotic PSI reaction center is composed of at least 11 subunits. P700 is a chlorophyll a/chlorophyll a' dimer, A0 is one or more chlorophyll a, A1 is one or both phylloquinones and FX is a shared 4Fe-4S iron-sulfur center. is required as a cofactor.

It localises to the plastid. It is found in the chloroplast thylakoid membrane. It carries out the reaction reduced [plastocyanin] + hnu + oxidized [2Fe-2S]-[ferredoxin] = oxidized [plastocyanin] + reduced [2Fe-2S]-[ferredoxin]. In terms of biological role, psaA and PsaB bind P700, the primary electron donor of photosystem I (PSI), as well as the electron acceptors A0, A1 and FX. PSI is a plastocyanin/cytochrome c6-ferredoxin oxidoreductase, converting photonic excitation into a charge separation, which transfers an electron from the donor P700 chlorophyll pair to the spectroscopically characterized acceptors A0, A1, FX, FA and FB in turn. Oxidized P700 is reduced on the lumenal side of the thylakoid membrane by plastocyanin or cytochrome c6. This is Photosystem I P700 chlorophyll a apoprotein A2 from Stigeoclonium helveticum (Green alga).